A 365-amino-acid chain; its full sequence is MPEITVRAKSKTYPVYINEFALEDVREKWTESLAKFSHVFVLTDEHVAELHKAKLDAVLADLPVVTYYVAPNGEEAKTFRVYEDVMTKLIETGLDRKAVLIAFGGGVIGDLGGFVAATYMRGIPFYQVPTTVLAHDSAVGGKVAINHPLGKNMIGNFYQPEAVIYDTQFFATLPEREMRSGFAEMIKHALISDQTLLRALMDTFTEPKDFYTKDLTPFLQRGIEIKANIVAQDETEQGVRAYLNFGHTFGHALEAYGNFGKWLHGEAITYGMIYALTMSETIYGLDFDLAEFKTWLKQLGYDTTFDATVPFNKILENMRHDKKTTFNEISMVLLEEIGKPVIFKAEDDLIFETYKRVMRNGGNGI.

NAD(+) contacts are provided by residues 106-110, 130-131, lysine 142, lysine 151, and 169-172; these read GVIGD, TT, and FFAT. Glutamate 184, histidine 247, and histidine 264 together coordinate Zn(2+).

The protein belongs to the sugar phosphate cyclases superfamily. Dehydroquinate synthase family. It depends on Co(2+) as a cofactor. Zn(2+) is required as a cofactor. NAD(+) serves as cofactor.

It is found in the cytoplasm. The enzyme catalyses 7-phospho-2-dehydro-3-deoxy-D-arabino-heptonate = 3-dehydroquinate + phosphate. It participates in metabolic intermediate biosynthesis; chorismate biosynthesis; chorismate from D-erythrose 4-phosphate and phosphoenolpyruvate: step 2/7. Catalyzes the conversion of 3-deoxy-D-arabino-heptulosonate 7-phosphate (DAHP) to dehydroquinate (DHQ). This chain is 3-dehydroquinate synthase, found in Listeria monocytogenes serotype 4b (strain CLIP80459).